The chain runs to 826 residues: Elongator complex protein 2 (826 aa).

WD repeat units follow at residues 13 to 53 (CCPN…VVTN), 56 to 100 (GHTA…LLKA), 105 to 152 (GHEG…VMCL), 158 to 200 (GNGF…FQKV), 205 to 246 (GHED…TSLE), 281 to 329 (GHEN…GVWL), 339 to 378 (GNTL…PREW), 386 to 425 (GHFD…DQSQ), 436 to 474 (IHGY…VENF), 565 to 609 (GHGY…QVQN), 612 to 651 (FHSL…SPEF), 667 to 706 (VHSR…DDCI), 712 to 753 (PCSS…CLYT), and 777 to 826 (SHTL…KCAL).

It belongs to the WD repeat ELP2 family. In terms of assembly, component of the elongator complex which consists of ELP1, ELP2, ELP3, ELP4, ELP5 and ELP6. Interacts with STAT3 and JAKs.

It is found in the cytoplasm. It localises to the nucleus. The protein operates within tRNA modification; 5-methoxycarbonylmethyl-2-thiouridine-tRNA biosynthesis. Functionally, component of the elongator complex which is required for multiple tRNA modifications, including mcm5U (5-methoxycarbonylmethyl uridine), mcm5s2U (5-methoxycarbonylmethyl-2-thiouridine), and ncm5U (5-carbamoylmethyl uridine). The elongator complex catalyzes the formation of carboxymethyluridine in the wobble base at position 34 in tRNAs. This Homo sapiens (Human) protein is Elongator complex protein 2 (ELP2).